Reading from the N-terminus, the 160-residue chain is Eukaryotic translation initiation factor 5A-4 (160 aa).

A compositionally biased stretch (basic and acidic residues) spans 1–12 (MSDEEHHFESKA). Residues 1-21 (MSDEEHHFESKADAGASKTYP) are disordered. Lys-52 is subject to Hypusine.

It belongs to the eIF-5A family. Post-translationally, lys-52 undergoes hypusination, a unique post-translational modification that consists in the addition of a butylamino group from spermidine to lysine side chain, leading to the formation of the unusual amino acid hypusine. eIF-5As are the only known proteins to undergo this modification, which is essential for their function.

In terms of biological role, translation factor that promotes translation elongation and termination, particularly upon ribosome stalling at specific amino acid sequence contexts. Binds between the exit (E) and peptidyl (P) site of the ribosome and promotes rescue of stalled ribosome: specifically required for efficient translation of polyproline-containing peptides as well as other motifs that stall the ribosome. Acts as a ribosome quality control (RQC) cofactor by joining the RQC complex to facilitate peptidyl transfer during CAT tailing step. This Solanum lycopersicum (Tomato) protein is Eukaryotic translation initiation factor 5A-4.